Reading from the N-terminus, the 177-residue chain is MLDAFSRVVVNSDAKAAYVGGSDLQALKSFIADGNKRLDAVNSIVSNASCMVSDAVSGMICENPGLISPGGNCYTNRRMAACLRDGEIILRYVSYALLAGDASVLEDRCLNGLKETYIALGVPTNSSIRAVSIMKAQAVAFITNTATERKMSFAAGDCTSLASEVASYFDRVGAAIS.

Phycourobilin contacts are provided by C50 and C61. At N72 the chain carries N4-methylasparagine. (2R,3E)-phycoerythrobilin contacts are provided by C82 and C158.

Belongs to the phycobiliprotein family. Heteromer of 6 alpha, 6 beta and one gamma chain. In terms of processing, contains two covalently linked phycoerythrobilin chromophores and one covalently linked phycourobilin chromophore.

It is found in the plastid. It localises to the chloroplast thylakoid membrane. In terms of biological role, light-harvesting photosynthetic bile pigment-protein from the phycobiliprotein complex. This Porphyridium purpureum (Red alga) protein is B-phycoerythrin beta chain (cpeB).